Here is an 860-residue protein sequence, read N- to C-terminus: JmjC domain-containing histone demethylation protein 1 (860 aa).

Disordered regions lie at residues 1 to 45 (MSEQ…EEGK), 117 to 212 (STSP…PKRK), and 408 to 440 (DVKE…GGEI). A PHD-type zinc finger spans residues 23 to 116 (PEPCPLCRET…KWYCAPCLAR (94 aa)). 2 stretches are compositionally biased toward basic and acidic residues: residues 183–192 (IDMKSEREQQ) and 408–433 (DVKE…HLTE). The JmjC domain maps to 416–579 (NDSREGSEIR…TQLRLRQIEI (164 aa)). Thr-471 serves as a coordination point for substrate. Residues His-474 and Asp-476 each coordinate Fe cation. Lys-491 contacts substrate. His-547 provides a ligand contact to Fe cation. 2 disordered regions span residues 744–795 (HPPA…ANEN) and 837–860 (GPKL…DIDH). Residues 750-763 (ENRQSPQIETTTVQ) show a composition bias toward polar residues. Positions 767 to 795 (PSTSSSDAISGSGPGASPGASANGGANEN) are enriched in low complexity.

The protein belongs to the JHDM1 histone demethylase family. The cofactor is Fe(2+).

It localises to the nucleus. The enzyme catalyses N(6),N(6)-dimethyl-L-lysyl(36)-[histone H3] + 2 2-oxoglutarate + 2 O2 = L-lysyl(36)-[histone H3] + 2 formaldehyde + 2 succinate + 2 CO2. Histone demethylase that specifically demethylates 'Lys-36' of histone H3, thereby playing a central role in histone code. This is JmjC domain-containing histone demethylation protein 1 (JHD1) from Cryptococcus neoformans var. neoformans serotype D (strain JEC21 / ATCC MYA-565) (Filobasidiella neoformans).